The sequence spans 397 residues: Methylthioribose kinase (397 aa).

ATP is bound by residues Asn43, Lys60, and 114-116; that span reads EDL. Substrate is bound at residue Asp232. 249–251 contacts ATP; sequence DPE. Arg340 contributes to the substrate binding site.

This sequence belongs to the methylthioribose kinase family. Homodimer.

It catalyses the reaction 5-(methylsulfanyl)-D-ribose + ATP = 5-(methylsulfanyl)-alpha-D-ribose 1-phosphate + ADP + H(+). It functions in the pathway amino-acid biosynthesis; L-methionine biosynthesis via salvage pathway; S-methyl-5-thio-alpha-D-ribose 1-phosphate from S-methyl-5'-thioadenosine (hydrolase route): step 2/2. Its function is as follows. Catalyzes the phosphorylation of methylthioribose into methylthioribose-1-phosphate. In Bacillus pumilus (strain SAFR-032), this protein is Methylthioribose kinase.